The chain runs to 240 residues: RNA transcription, translation and transport factor protein (240 aa).

Belongs to the RTRAF family. In terms of assembly, homodimer. Component of a tRNA-splicing ligase complex.

The protein resides in the nucleus. It is found in the cytoplasm. It localises to the cytosol. Its subcellular location is the perinuclear region. The protein localises to the cytoskeleton. The protein resides in the microtubule organizing center. It is found in the centrosome. In terms of biological role, RNA-binding protein involved in modulation of mRNA transcription by Polymerase II. Component of the tRNA-splicing ligase complex. The polypeptide is RNA transcription, translation and transport factor protein (Xenopus laevis (African clawed frog)).